The following is a 121-amino-acid chain: SLFELGKMILQETGKNPAKSYGAYGCNCGVLGRGKPKDATDRCCYVHKCCYKKLTGCNPKKDRYSYSWKDKTIVCGENNPCLKELCECDKAVAICLRENLGTYNKLYRYHLKPFCKKADDC.

Cystine bridges form between Cys26–Cys115, Cys28–Cys44, Cys43–Cys95, Cys49–Cys121, Cys50–Cys88, Cys57–Cys81, and Cys75–Cys86. The segment at 105-117 is important for membrane-damaging activities in eukaryotes and bacteria; heparin-binding; it reads KLYRYHLKPFCKK.

This sequence belongs to the phospholipase A2 family. Group II subfamily. K49 sub-subfamily. As to quaternary structure, homodimer; non-covalently linked. Expressed by the venom gland.

The protein resides in the secreted. Its activity is regulated as follows. Rosmarinic acid inhibits the myotoxic activity. Bromophenacyl bromide (BPB) inhibits the myotoxic activity through a covalent binding. Caffeic acid and aristolochic acid, two plant compounds used in folk medicine used to treat envenomation, inhibit the myotoxic activity. In terms of biological role, snake venom phospholipase A2 (PLA2) homolog that lacks enzymatic activity. Is myotoxic and displays edema-inducing activities. Induces neuromuscular blockage. A model of myotoxic mechanism has been proposed: an apo Lys49-PLA2 is activated by the entrance of a hydrophobic molecule (e.g. fatty acid) at the hydrophobic channel of the protein leading to a reorientation of a monomer. This reorientation causes a transition between 'inactive' to 'active' states, causing alignment of C-terminal and membrane-docking sites (MDoS) side-by-side and putting the membrane-disruption sites (MDiS) in the same plane, exposed to solvent and in a symmetric position for both monomers. The MDoS region stabilizes the toxin on membrane by the interaction of charged residues with phospholipid head groups. Subsequently, the MDiS region destabilizes the membrane with penetration of hydrophobic residues. This insertion causes a disorganization of the membrane, allowing an uncontrolled influx of ions (i.e. calcium and sodium), and eventually triggering irreversible intracellular alterations and cell death. This is Basic phospholipase A2 homolog piratoxin-1 from Bothrops pirajai (Piraja's lancehead).